A 340-amino-acid chain; its full sequence is Fructose-1,6-bisphosphatase class 1 (340 aa).

Residues Glu107, Asp126, Leu128, and Asp129 each contribute to the Mg(2+) site. Asn215 serves as a coordination point for substrate. A Mg(2+)-binding site is contributed by Glu287.

The protein belongs to the FBPase class 1 family. In terms of assembly, homotetramer. Mg(2+) is required as a cofactor.

The protein resides in the cytoplasm. It catalyses the reaction beta-D-fructose 1,6-bisphosphate + H2O = beta-D-fructose 6-phosphate + phosphate. Its pathway is carbohydrate biosynthesis; gluconeogenesis. The chain is Fructose-1,6-bisphosphatase class 1 from Brucella canis (strain ATCC 23365 / NCTC 10854 / RM-666).